The sequence spans 336 residues: Glyceraldehyde-3-phosphate dehydrogenase (336 aa).

NAD(+)-binding positions include 12–13 (RI), Asp34, and Arg79. Residues 150–152 (SCT), Thr181, 210–211 (TG), and Arg233 each bind D-glyceraldehyde 3-phosphate. Catalysis depends on Cys151, which acts as the Nucleophile. Asn315 is an NAD(+) binding site.

It belongs to the glyceraldehyde-3-phosphate dehydrogenase family. Homotetramer.

It localises to the cytoplasm. It carries out the reaction D-glyceraldehyde 3-phosphate + phosphate + NAD(+) = (2R)-3-phospho-glyceroyl phosphate + NADH + H(+). It functions in the pathway carbohydrate degradation; glycolysis; pyruvate from D-glyceraldehyde 3-phosphate: step 1/5. The sequence is that of Glyceraldehyde-3-phosphate dehydrogenase (gpdA) from Aspergillus niger.